The primary structure comprises 495 residues: Serine/threonine-protein kinase STN8, chloroplastic (495 aa).

Residues 1–49 (MASLLSPATPTATSAAFHSCSTAGFSTPTHISSQNSSLSLLSRRGCMMR) constitute a chloroplast transit peptide. Residues 133-477 (FLVTEKLGEG…AAAALRHPYF (345 aa)) enclose the Protein kinase domain. Residues 139–147 (LGEGSFGVV) and K186 contribute to the ATP site. D308 acts as the Proton acceptor in catalysis.

It belongs to the protein kinase superfamily. Ser/Thr protein kinase family.

Its subcellular location is the plastid. The protein localises to the chloroplast thylakoid. It carries out the reaction L-seryl-[protein] + ATP = O-phospho-L-seryl-[protein] + ADP + H(+). It catalyses the reaction L-threonyl-[protein] + ATP = O-phospho-L-threonyl-[protein] + ADP + H(+). In terms of biological role, light-dependent serine/threonine protein kinase that specifically phosphorylates N-terminal threonine residues in psbA/D1, psbD/D2, psbC/CP43 and psbH, which are components of the core antenna complex of photosystem II. Phosphorylation of PSII core components facilitates the exchange of chlorophyll proteins between the grana and the stroma lamellae. Also involved in the phosphorylation of the calcium-sensing receptor (CaS). This Arabidopsis thaliana (Mouse-ear cress) protein is Serine/threonine-protein kinase STN8, chloroplastic (STN8).